The chain runs to 654 residues: Acetyl-coenzyme A synthetase (654 aa).

Residues 190 to 193 (RGGK) and Thr313 contribute to the CoA site. ATP contacts are provided by residues 389-391 (GEP), 413-418 (DTWWQT), Asp504, and Arg519. Ser527 provides a ligand contact to CoA. Residue Arg530 coordinates ATP. Residues Val541 and Val546 each contribute to the Mg(2+) site. Lys613 carries the post-translational modification N6-acetyllysine.

It belongs to the ATP-dependent AMP-binding enzyme family. Requires Mg(2+) as cofactor. In terms of processing, acetylated. Deacetylation by the SIR2-homolog deacetylase activates the enzyme.

The enzyme catalyses acetate + ATP + CoA = acetyl-CoA + AMP + diphosphate. Its function is as follows. Catalyzes the conversion of acetate into acetyl-CoA (AcCoA), an essential intermediate at the junction of anabolic and catabolic pathways. AcsA undergoes a two-step reaction. In the first half reaction, AcsA combines acetate with ATP to form acetyl-adenylate (AcAMP) intermediate. In the second half reaction, it can then transfer the acetyl group from AcAMP to the sulfhydryl group of CoA, forming the product AcCoA. This is Acetyl-coenzyme A synthetase from Leptospira borgpetersenii serovar Hardjo-bovis (strain JB197).